The chain runs to 445 residues: Exodeoxyribonuclease 7 large subunit (445 aa).

The protein belongs to the XseA family. As to quaternary structure, heterooligomer composed of large and small subunits.

Its subcellular location is the cytoplasm. It catalyses the reaction Exonucleolytic cleavage in either 5'- to 3'- or 3'- to 5'-direction to yield nucleoside 5'-phosphates.. Its function is as follows. Bidirectionally degrades single-stranded DNA into large acid-insoluble oligonucleotides, which are then degraded further into small acid-soluble oligonucleotides. In Staphylococcus aureus (strain USA300 / TCH1516), this protein is Exodeoxyribonuclease 7 large subunit.